Consider the following 393-residue polypeptide: 4-O-methyl-glucuronoyl methylesterase (393 aa).

Positions 1–19 (MKLSAALLAIAAFANVASA) are cleaved as a signal peptide. Gln20 carries the pyrrolidone carboxylic acid modification. Cys22 and Cys56 are disulfide-bonded. N-linked (GlcNAc...) asparagine glycans are attached at residues Asn103 and Asn168. The short motif at 203–208 (GCSRNG) is the GXSYXG catalytic site motif element. Disulfide bonds link Cys204-Cys340 and Cys236-Cys312. Residue Ser205 is the Nucleophile of the active site. Lys209, Gln251, Glu259, and Trp303 together coordinate substrate. The active-site Proton donor/acceptor is His339.

The protein belongs to the carbohydrate esterase 15 (CE15) family.

The protein resides in the secreted. It catalyses the reaction a 4-O-methyl-alpha-D-glucuronosyl ester derivative + H2O = 4-O-methyl-alpha-D-glucuronate derivative + an alcohol + H(+). Glucuronoyl esterase which may play a significant role in biomass degradation, as it is considered to disconnect hemicellulose from lignin through the hydrolysis of the ester bond between 4-O-methyl-D-glucuronic acid residues of glucuronoxylans and aromatic alcohols of lignin. This Schizophyllum commune (strain H4-8 / FGSC 9210) (Split gill fungus) protein is 4-O-methyl-glucuronoyl methylesterase.